The chain runs to 477 residues: UDP-N-acetylmuramate--L-alanine ligase (477 aa).

Residue 122-128 (GTHGKTT) participates in ATP binding.

It belongs to the MurCDEF family.

It is found in the cytoplasm. The enzyme catalyses UDP-N-acetyl-alpha-D-muramate + L-alanine + ATP = UDP-N-acetyl-alpha-D-muramoyl-L-alanine + ADP + phosphate + H(+). It functions in the pathway cell wall biogenesis; peptidoglycan biosynthesis. Cell wall formation. The chain is UDP-N-acetylmuramate--L-alanine ligase from Xanthomonas campestris pv. campestris (strain 8004).